A 355-amino-acid chain; its full sequence is Syntaxin-5 (355 aa).

Topologically, residues 1–333 are cytoplasmic; it reads MIPRKRYGSK…KYFQSVTSNR (333 aa). Positions 245–247 match the IxM motif; signal for cargo packaging into COPII-coated vesicles motif; sequence IDM. Positions 263–325 constitute a t-SNARE coiled-coil homology domain; sequence DSYIQSRADT…EAAHSEILKY (63 aa). A coiled-coil region spans residues 287 to 318; that stretch reads FQQLAHMVKEQEETIQRIDENVLGAQLDVEAA. Residues 334–354 traverse the membrane as a helical; Anchor for type IV membrane protein segment; it reads WLMVKIFLILIVFFIIFVVFL. Residue alanine 355 is a topological domain, vesicular.

The protein belongs to the syntaxin family. As to quaternary structure, part of a ternary complex containing STX5A, NSFL1C and VCP. Part of a unique SNARE complex composed of the Golgi SNAREs GOSR1, GOSR2, YKT6 and VTI1A. Component of a SNARE complex consisting of STX5, YKT6, GOSR1 and BET1L. Interacts with BET1L. Interacts with BET1. Interacts with COG4. Interacts with GM130/GOLGA2. Interacts (via IxM motif) with SEC24C and SEC24D; mediates STX5 packaging into COPII-coated vesicles. Interacts with VLDLR; this interaction mediates VLDLR translocation from the endoplasmic reticulum to the plasma membrane.

The protein localises to the endoplasmic reticulum-Golgi intermediate compartment membrane. It localises to the golgi apparatus membrane. In terms of biological role, mediates endoplasmic reticulum to Golgi transport. Together with p115/USO1 and GM130/GOLGA2, involved in vesicle tethering and fusion at the cis-Golgi membrane to maintain the stacked and inter-connected structure of the Golgi apparatus. Functionally, required for Golgi to endoplasmic reticulum retrogade transport, and for intra-Golgi transport. The polypeptide is Syntaxin-5 (Stx5) (Mus musculus (Mouse)).